The chain runs to 266 residues: Aliphatic sulfonates import ATP-binding protein SsuB (266 aa).

Residues Leu-23 to Leu-244 form the ABC transporter domain. An ATP-binding site is contributed by Gly-55 to Ser-62.

The protein belongs to the ABC transporter superfamily. Aliphatic sulfonates importer (TC 3.A.1.17.2) family. The complex is composed of two ATP-binding proteins (SsuB), two transmembrane proteins (SsuC) and a solute-binding protein (SsuA).

Its subcellular location is the cell inner membrane. The catalysed reaction is ATP + H2O + aliphatic sulfonate-[sulfonate-binding protein]Side 1 = ADP + phosphate + aliphatic sulfonateSide 2 + [sulfonate-binding protein]Side 1.. Functionally, part of the ABC transporter complex SsuABC involved in aliphatic sulfonates import. Responsible for energy coupling to the transport system. The protein is Aliphatic sulfonates import ATP-binding protein SsuB of Pectobacterium atrosepticum (strain SCRI 1043 / ATCC BAA-672) (Erwinia carotovora subsp. atroseptica).